Reading from the N-terminus, the 355-residue chain is Probable NADPH-dependent quinone reductase tdiC (355 aa).

It belongs to the zinc-containing alcohol dehydrogenase family. It depends on NADPH as a cofactor.

It functions in the pathway secondary metabolite biosynthesis. Functionally, probable NADPH-dependent quinone reductase; part of the gene cluster that mediates the biosynthesis of terrequinone A, an antitumor agent. The first step in the biosynthetic pathway for terrequinone A is formation of indole pyruvic acid (IPA) from L-tryptophan by the aminotransferase tdiD. The nonribosomal peptide synthase tdiA then immediately converts unstable IPA to didemethylasterriquinone D (DDAQ D), via condensation of 2 IPA molecules. The symmetric connectivity of the 2 IPA molecules is thought to arise by head-to-tail dual Claisen condensations facilitated by the TE domain. TdiB then catalyzes reverse prenylation by transferring dimethylallyl diphosphate to carbon atom 2' of DDAQ D, to yield asterriquinone C-1. Finally, tdiC and tdiE enzymes robustly convert asterriquinone C-1 to terrequinone A via a transformation involving regular prenylation at carbon atom 5, which requires elimination of the hydroxy group on C-5. The protein is Probable NADPH-dependent quinone reductase tdiC of Emericella nidulans (strain FGSC A4 / ATCC 38163 / CBS 112.46 / NRRL 194 / M139) (Aspergillus nidulans).